Here is a 291-residue protein sequence, read N- to C-terminus: Ribosomal RNA small subunit methyltransferase A (291 aa).

S-adenosyl-L-methionine is bound by residues asparagine 28, leucine 30, glycine 55, glutamate 77, aspartate 103, and asparagine 123.

This sequence belongs to the class I-like SAM-binding methyltransferase superfamily. rRNA adenine N(6)-methyltransferase family. RsmA subfamily.

Its subcellular location is the cytoplasm. The enzyme catalyses adenosine(1518)/adenosine(1519) in 16S rRNA + 4 S-adenosyl-L-methionine = N(6)-dimethyladenosine(1518)/N(6)-dimethyladenosine(1519) in 16S rRNA + 4 S-adenosyl-L-homocysteine + 4 H(+). In terms of biological role, specifically dimethylates two adjacent adenosines (A1518 and A1519) in the loop of a conserved hairpin near the 3'-end of 16S rRNA in the 30S particle. May play a critical role in biogenesis of 30S subunits. The sequence is that of Ribosomal RNA small subunit methyltransferase A from Azorhizobium caulinodans (strain ATCC 43989 / DSM 5975 / JCM 20966 / LMG 6465 / NBRC 14845 / NCIMB 13405 / ORS 571).